A 528-amino-acid chain; its full sequence is Cytochrome P450 1A5 (528 aa).

Cys467 is a heme binding site.

It belongs to the cytochrome P450 family. Requires heme as cofactor.

It is found in the endoplasmic reticulum membrane. Its subcellular location is the microsome membrane. It catalyses the reaction an organic molecule + reduced [NADPH--hemoprotein reductase] + O2 = an alcohol + oxidized [NADPH--hemoprotein reductase] + H2O + H(+). Functionally, cytochromes P450 are a group of heme-thiolate monooxygenases. In liver microsomes, this enzyme is involved in an NADPH-dependent electron transport pathway. It oxidizes a variety of structurally unrelated compounds, including steroids, fatty acids, and xenobiotics. This is Cytochrome P450 1A5 (CYP1A5) from Gallus gallus (Chicken).